The primary structure comprises 158 residues: Putative ribonucleoside-diphosphate reductase small chain B (158 aa).

The protein belongs to the ribonucleoside diphosphate reductase small chain family.

The chain is Putative ribonucleoside-diphosphate reductase small chain B (RNR2B) from Arabidopsis thaliana (Mouse-ear cress).